The following is a 319-amino-acid chain: Lipoyl synthase (319 aa).

The segment at 1 to 32 (MVVLVDTVSSTPVRPRHPEKAARPDSLSPKKP) is disordered. Positions 16–32 (RHPEKAARPDSLSPKKP) are enriched in basic and acidic residues. 7 residues coordinate [4Fe-4S] cluster: C61, C66, C72, C87, C91, C94, and S300. Residues 73-289 (WDKKHATFMI…GKTAYAKGFL (217 aa)) form the Radical SAM core domain.

The protein belongs to the radical SAM superfamily. Lipoyl synthase family. The cofactor is [4Fe-4S] cluster.

Its subcellular location is the cytoplasm. It carries out the reaction [[Fe-S] cluster scaffold protein carrying a second [4Fe-4S](2+) cluster] + N(6)-octanoyl-L-lysyl-[protein] + 2 oxidized [2Fe-2S]-[ferredoxin] + 2 S-adenosyl-L-methionine + 4 H(+) = [[Fe-S] cluster scaffold protein] + N(6)-[(R)-dihydrolipoyl]-L-lysyl-[protein] + 4 Fe(3+) + 2 hydrogen sulfide + 2 5'-deoxyadenosine + 2 L-methionine + 2 reduced [2Fe-2S]-[ferredoxin]. It functions in the pathway protein modification; protein lipoylation via endogenous pathway; protein N(6)-(lipoyl)lysine from octanoyl-[acyl-carrier-protein]: step 2/2. In terms of biological role, catalyzes the radical-mediated insertion of two sulfur atoms into the C-6 and C-8 positions of the octanoyl moiety bound to the lipoyl domains of lipoate-dependent enzymes, thereby converting the octanoylated domains into lipoylated derivatives. This chain is Lipoyl synthase, found in Rhodopseudomonas palustris (strain BisB5).